Consider the following 502-residue polypeptide: MTQEEISGISQDENNLIAERRSKLTALRQTGNAFPNDYRRDNLARILHEKYDSCSREELESSQVTVKVAGRMLFKRVMGKASFATIQDMSGRIQLYISNDHTGETAHEAFRHYDLGDILGAEGVLFKTRTDELSLRVTQLHLLTKSLRPLPEKFHGLADQEQKYRRRYLDLITNEDTRRVFAIRSKIIQAIREFLVDRDYLEVETPMMHSIPGGATARPFVTHHNALDMSLYLRIAPELYLKRLVVGGMEKVFEINRNFRNEGISTRHNPEFTMLEFYEAYQDHNYLMDLTESMLREVALKVSGTTRIVYQQREMDLAQPFARLTIAQAILKYHPEYSDAQLNDRDFLTKALQAKGVTVNPDSGIGGLQLALFDETTEHLLFEPVFIVDYPAEVSPLARCNDANPEITDRFELYIAGREIANGFSELNDPEDQANRFLEQARAKEAGDLEAMHYDADYIQALEYGLPPTAGEGIGIDRLVMLLTDSPSIRDVILFPQLRKED.

Mg(2+) is bound by residues Glu-412 and Glu-419.

It belongs to the class-II aminoacyl-tRNA synthetase family. Homodimer. Requires Mg(2+) as cofactor.

The protein resides in the cytoplasm. The enzyme catalyses tRNA(Lys) + L-lysine + ATP = L-lysyl-tRNA(Lys) + AMP + diphosphate. The chain is Lysine--tRNA ligase from Nitrosomonas europaea (strain ATCC 19718 / CIP 103999 / KCTC 2705 / NBRC 14298).